We begin with the raw amino-acid sequence, 174 residues long: Methylamine utilization protein MauL (174 aa).

The protein operates within one-carbon metabolism; methylamine degradation. Functionally, probably involved in TTQ prosthetic group biosynthesis. The chain is Methylamine utilization protein MauL (mauL) from Methylophilus methylotrophus (Bacterium W3A1).